We begin with the raw amino-acid sequence, 364 residues long: Mannonate dehydratase (364 aa).

Belongs to the mannonate dehydratase family. It depends on Fe(2+) as a cofactor. Mn(2+) is required as a cofactor.

It catalyses the reaction D-mannonate = 2-dehydro-3-deoxy-D-gluconate + H2O. The protein operates within carbohydrate metabolism; pentose and glucuronate interconversion. Catalyzes the dehydration of D-mannonate. The protein is Mannonate dehydratase of Endomicrobium trichonymphae.